The primary structure comprises 167 residues: Leptin (167 aa).

Positions 1-21 are cleaved as a signal peptide; it reads MRCGSLCRFLWLWSCLPYIEA. A disulfide bond links Cys117 and Cys167.

Belongs to the leptin family.

It is found in the secreted. Its function is as follows. Key player in the regulation of energy balance and body weight control. Once released into the circulation, has central and peripheral effects by binding LEPR, found in many tissues, which results in the activation of several major signaling pathways. In the hypothalamus, acts as an appetite-regulating factor that induces a decrease in food intake and an increase in energy consumption by inducing anorexinogenic factors and suppressing orexigenic neuropeptides, also regulates bone mass and secretion of hypothalamo-pituitary-adrenal hormones. In the periphery, increases basal metabolism, influences reproductive function, regulates pancreatic beta-cell function and insulin secretion, is pro-angiogenic for endothelial cell and affects innate and adaptive immunity. In the arcuate nucleus of the hypothalamus, activates by depolarization POMC neurons inducing FOS and SOCS3 expression to release anorexigenic peptides and inhibits by hyperpolarization NPY neurons inducing SOCS3 with a consequent reduction on release of orexigenic peptides. In addition to its known satiety inducing effect, has a modulatory role in nutrient absorption. In the intestine, reduces glucose absorption by enterocytes by activating PKC and leading to a sequential activation of p38, PI3K and ERK signaling pathways which exerts an inhibitory effect on glucose absorption. Acts as a growth factor on certain tissues, through the activation of different signaling pathways increases expression of genes involved in cell cycle regulation such as CCND1, via JAK2-STAT3 pathway, or VEGFA, via MAPK1/3 and PI3K-AKT1 pathways. May also play an apoptotic role via JAK2-STAT3 pathway and up-regulation of BIRC5 expression. Pro-angiogenic, has mitogenic activity on vascular endothelial cells and plays a role in matrix remodeling by regulating the expression of matrix metalloproteinases (MMPs) and tissue inhibitors of metalloproteinases (TIMPs). In innate immunity, modulates the activity and function of neutrophils by increasing chemotaxis and the secretion of oxygen radicals. Increases phagocytosis by macrophages and enhances secretion of pro-inflammatory mediators. Increases cytotoxic ability of NK cells. Plays a pro-inflammatory role, in synergy with IL1B, by inducing NOS2 which promotes the production of IL6, IL8 and Prostaglandin E2, through a signaling pathway that involves JAK2, PI3K, MAP2K1/MEK1 and MAPK14/p38. In adaptive immunity, promotes the switch of memory T-cells towards T helper-1 cell immune responses. Increases CD4(+)CD25(-) T-cell proliferation and reduces autophagy during TCR (T-cell receptor) stimulation, through MTOR signaling pathway activation and BCL2 up-regulation. In Halichoerus grypus (Gray seal), this protein is Leptin (LEP).